We begin with the raw amino-acid sequence, 530 residues long: N-acetylmuramoyl-L-alanine amidase (530 aa).

Residues 1–22 form the signal peptide; sequence MKAWGALWIVLGLLLWPEPGAA. 3 N-linked (GlcNAc...) asparagine glycosylation sites follow: N61, N80, and N174. A Phosphoserine modification is found at S219. N-linked (GlcNAc...) asparagine glycosylation occurs at N335. Positions 386 to 512 constitute an N-acetylmuramoyl-L-alanine amidase domain; sequence FLYVHHTYVP…RQLVLTHCPG (127 aa). H390 lines the Zn(2+) pocket. C399 and C405 are joined by a disulfide. An N-linked (GlcNAc...) asparagine glycan is attached at N465. Zn(2+)-binding residues include H502 and C510.

This sequence belongs to the N-acetylmuramoyl-L-alanine amidase 2 family. The cofactor is Zn(2+). Strongly expressed in liver and fetal liver.

The protein localises to the secreted. It is found in the membrane. It catalyses the reaction Hydrolyzes the link between N-acetylmuramoyl residues and L-amino acid residues in certain cell-wall glycopeptides.. May play a scavenger role by digesting biologically active peptidoglycan (PGN) into biologically inactive fragments. Has no direct bacteriolytic activity. In Mus musculus (Mouse), this protein is N-acetylmuramoyl-L-alanine amidase (Pglyrp2).